A 192-amino-acid polypeptide reads, in one-letter code: Tail completion protein Z (192 aa).

This sequence belongs to the Lambdalikevirus tail completion protein family.

The protein localises to the virion. The protein resides in the host cytoplasm. In terms of biological role, stabilizes the tail structure and acts as a connector between the end of tail and the portal vertex of the capsid. The chain is Tail completion protein Z (Z) from Escherichia phage lambda (Bacteriophage lambda).